The primary structure comprises 373 residues: Anhydro-N-acetylmuramic acid kinase (373 aa).

12-19 (GTSLDGVD) provides a ligand contact to ATP.

This sequence belongs to the anhydro-N-acetylmuramic acid kinase family.

It catalyses the reaction 1,6-anhydro-N-acetyl-beta-muramate + ATP + H2O = N-acetyl-D-muramate 6-phosphate + ADP + H(+). The protein operates within amino-sugar metabolism; 1,6-anhydro-N-acetylmuramate degradation. Its pathway is cell wall biogenesis; peptidoglycan recycling. In terms of biological role, catalyzes the specific phosphorylation of 1,6-anhydro-N-acetylmuramic acid (anhMurNAc) with the simultaneous cleavage of the 1,6-anhydro ring, generating MurNAc-6-P. Is required for the utilization of anhMurNAc either imported from the medium or derived from its own cell wall murein, and thus plays a role in cell wall recycling. The chain is Anhydro-N-acetylmuramic acid kinase from Salmonella gallinarum (strain 287/91 / NCTC 13346).